Reading from the N-terminus, the 244-residue chain is CTD nuclear envelope phosphatase 1 (244 aa).

The helical transmembrane segment at 7 to 29 (LLGLRGFVAFAAKLWSFVLYLLR) threads the bilayer. In terms of domain architecture, FCP1 homology spans 57 to 224 (SQVKRKVLVL…LNLLPMLDAL (168 aa)).

The protein belongs to the dullard family. Interacts with bmpr1a, bmpr1b and bmpr2.

Its subcellular location is the membrane. It is found in the cytoplasm. The protein localises to the perinuclear region. The catalysed reaction is O-phospho-L-seryl-[protein] + H2O = L-seryl-[protein] + phosphate. The enzyme catalyses O-phospho-L-threonyl-[protein] + H2O = L-threonyl-[protein] + phosphate. Its function is as follows. Serine/threonine protein phosphatase that may dephosphorylate and activate lipins. Lipins are phosphatidate phosphatases that catalyze the conversion of phosphatidic acid to diacylglycerol and control the metabolism of fatty acids at different levels. May indirectly modulate the lipid composition of nuclear and/or endoplasmic reticulum membranes and be required for proper nuclear membrane morphology and/or dynamics. May also indirectly regulate the production of lipid droplets and triacylglycerol. Induces neuronal differentiation by antagonizing BMP signaling. Acts both by dephosphorylating BMPR1A and by promoting BMPR2 proteasomal degradation. In Xenopus tropicalis (Western clawed frog), this protein is CTD nuclear envelope phosphatase 1 (ctdnep1).